The sequence spans 369 residues: Methionine import ATP-binding protein MetN (369 aa).

The ABC transporter domain occupies 31–266 (VEMKDVRRMF…PQSPVTQSML (236 aa)). Residue 63–70 (GRSGAGKS) participates in ATP binding.

The protein belongs to the ABC transporter superfamily. Methionine importer (TC 3.A.1.24) family. The complex is composed of two ATP-binding proteins (MetN), two transmembrane proteins (MetI) and a solute-binding protein (MetQ).

The protein resides in the cell inner membrane. The enzyme catalyses L-methionine(out) + ATP + H2O = L-methionine(in) + ADP + phosphate + H(+). It carries out the reaction D-methionine(out) + ATP + H2O = D-methionine(in) + ADP + phosphate + H(+). In terms of biological role, part of the ABC transporter complex MetNIQ involved in methionine import. Responsible for energy coupling to the transport system. This is Methionine import ATP-binding protein MetN from Brucella abortus (strain 2308).